Reading from the N-terminus, the 191-residue chain is Superoxide dismutase [Mn/Fe] (191 aa).

Residues His27, His74, Asp157, and His161 each contribute to the Fe(3+) site. Mn(2+) contacts are provided by His27, His74, Asp157, and His161.

The protein belongs to the iron/manganese superoxide dismutase family. Homodimer. The cofactor is Mn(2+). Fe(3+) serves as cofactor.

The enzyme catalyses 2 superoxide + 2 H(+) = H2O2 + O2. With respect to regulation, inhibited by hydrogen peroxide. Destroys superoxide anion radicals which are normally produced within the cells and which are toxic to biological systems. Catalyzes the dismutation of superoxide anion radicals into O2 and H2O2 by successive reduction and oxidation of the transition metal ion at the active site. The protein is Superoxide dismutase [Mn/Fe] (sodB) of Porphyromonas gingivalis (strain ATCC BAA-308 / W83).